Reading from the N-terminus, the 198-residue chain is Golgi to ER traffic protein 1 (198 aa).

Residues 1-6 (MDPFSI) lie on the Lumenal side of the membrane. A helical transmembrane segment spans residues 7-26 (LLTLTLIILAQNAVRIVGKS). Over 27–110 (QIHQSIWNLY…AIEKYLGLAI (84 aa)) the chain is Cytoplasmic. Residues 73–106 (KWTKLNRKYDQLQTEIKAVSDQVSQQQQAIEKYL) are a coiled coil. A helical membrane pass occupies residues 111–131 (SVTTTLPLWLFRFKYRKQPLF). Topologically, residues 132–155 (YFPKDTFPSYLEWILSFPSVPQGS) are lumenal. The chain crosses the membrane as a helical span at residues 156-172 (IGIMFWILLLNKFVSNL). Topologically, residues 173 to 198 (EFIVKTFSTKVEKPVPIVKVEDLSPK) are cytoplasmic.

The protein belongs to the WRB/GET1 family. As to quaternary structure, component of the Golgi to ER traffic (GET) complex, which is composed of GET1, GET2 and GET3. Within the complex, GET1 and GET2 form a heterotetramer which is stabilized by phosphatidylinositol binding and which binds to the GET3 homodimer.

The protein localises to the endoplasmic reticulum membrane. It localises to the golgi apparatus membrane. Functionally, required for the post-translational delivery of tail-anchored (TA) proteins to the endoplasmic reticulum. Together with GET2, acts as a membrane receptor for soluble GET3, which recognizes and selectively binds the transmembrane domain of TA proteins in the cytosol. The GET complex cooperates with the HDEL receptor ERD2 to mediate the ATP-dependent retrieval of resident ER proteins that contain a C-terminal H-D-E-L retention signal from the Golgi to the ER. This is Golgi to ER traffic protein 1 from Komagataella phaffii (strain GS115 / ATCC 20864) (Yeast).